The following is a 303-amino-acid chain: Siderophore enterobactin esterase (303 aa).

Belongs to the esterase D family. As to quaternary structure, homodimer.

The enzyme catalyses enterobactin + 3 H2O = 3 N-(2,3-dihydroxybenzoyl)-L-serine + 2 H(+). Displays specific enterobactin (ENB) esterase activity required for intracellular release of iron. Enterobactin is a xenosiderophore that is selectively produced by Gram-negative Enterobacteriaceae. The affinity for enterobactin is quite high, potentially due to the low natural abundance of this xenosiderophore in fungal habitats. Does not hydrolyze triacetylfusarinine C (TAFC). This is Siderophore enterobactin esterase from Emericella nidulans (strain FGSC A4 / ATCC 38163 / CBS 112.46 / NRRL 194 / M139) (Aspergillus nidulans).